A 471-amino-acid chain; its full sequence is Plasmepsin VII (471 aa).

A signal peptide spans 1-24 (MKSVYHHFAIIFFLKLFLCNCILS). The Peptidase A1 domain maps to 96 to 438 (YYGKIAIGEN…DKDNLQIGFV (343 aa)). Catalysis depends on residues Asp115 and Asp325.

The protein belongs to the peptidase A1 family.

The protein localises to the cytoplasm. This Plasmodium berghei (strain Anka) protein is Plasmepsin VII.